A 514-amino-acid polypeptide reads, in one-letter code: CUGBP Elav-like family member 2 (514 aa).

RRM domains lie at 44–127, 136–216, and 429–507; these read IKMF…PADS, RKLF…FADT, and ANLF…LKRS.

The protein belongs to the CELF/BRUNOL family.

It is found in the nucleus. It localises to the cytoplasm. In terms of biological role, RNA-binding protein implicated in the regulation of several post-transcriptional events. May be involved in pre-mRNA alternative splicing, mRNA translation repression and stability. This chain is CUGBP Elav-like family member 2 (celf2), found in Danio rerio (Zebrafish).